A 64-amino-acid polypeptide reads, in one-letter code: Drosocin antimicrobial peptides (64 aa).

The N-terminal stretch at 1–19 is a signal peptide; it reads MKFTIVFLLLACVFAMAVA. A propeptide spanning residues 20–21 is cleaved from the precursor; it reads TP. O-linked (GalNAc...) serine glycosylation is present at Ser28. The O-linked (GalNAc...) threonine glycan is linked to Thr32. A critical for inhibition of translation, possibly due to its role in mediating interactions with bacterial 23S rRNA and peptide chain release factors region spans residues 32 to 40; sequence TSHPRPIRV.

The protein belongs to the drosocin family. In terms of assembly, associates with the bacterial 50S ribosomal complex, occupying the nascent peptide exit tunnel. Interacts with bacterial 23S rRNA; this interaction is direct. Interacts with bacterial rplV/50S ribosomal protein L22; this interaction is direct. Interacts with bacterial prfA/peptide chain release factor RF1; while associated with the bacterial 50S ribosomal complex, this interaction is direct and traps RF1 on the ribosome, inhibiting further translation. In terms of processing, proteolytically cleaved at a pair of basic residues corresponding to the RXK/RR optimal cleavage site for furin proteases to produce two distinct antibacterial peptides. Post-translationally, O-glycosylated. O-glycosylation may be required for efficient uptake by target bacterial cells. Monosaccharide modification of Thr-32 provides better antibacterial activity than disaccharide modification or no modification. O-glycosylation of Thr-32 is not essential for antimicrobial activity but enhances this activity by mediating interactions with the 23S rRNA and increasing the efficiency of translation inhibition.

It is found in the secreted. Functionally, antibacterial peptide with strong anti-Gram-negative bacteria activity. Significantly contributes to antibacterial activity against Enterobacter cloacae but not Providencia burhodogranariea. Inhibitor of bacterial translation machinery that targets translation termination in a prfA- or prfB-dependent manner. Binds within the nascent peptide exit tunnel of the bacterial large ribosomal subunit, potentially interfering with nascent chain translocation that occurs post-peptide bond formation. Binds prfA/RF1 (and potentially prfB/RF2), trapping it on the ribosome after release of the nascent polypeptide chain and preventing further translation. The resulting depletion of peptide chain release factors further disrupts bacterial translation by preventing ribosomal peptide chain release and inducing stop codon readthrough. Entry into target Escherichia coli cells requires the bacterial peptide antibiotic transporter sbmA. In terms of biological role, peptide with significant antibacterial activity against Providencia burhodogranariea but not Enterobacter cloacae. The protein is Drosocin antimicrobial peptides (Dro) of Drosophila simulans (Fruit fly).